An 879-amino-acid chain; its full sequence is MADLAPKYNPNEVEKGRYQEWLDEDLFKPSGDKKAHPYSIVIPPPNVTGKLHLGHAWDTAIQDTLIRFKRMQGYDTLYLPGMDHAGIATQAKVEAKLRTQGKDRHEMGREAFVKQVWDWKDEYASIIKSQWAKMGLSLDYSRERFTLDKGLSKAVRKVFVQLYNEGLIYRGEYIINWDPKLETALSDIEVIHKDDKGAFYHIKYPFADGSGFVEIATTRPETMFGDTAVAVAPGDERYKDIVGKELVLPLVGRHIPIIEDQHVDPEFGTGLVKITPAHDPNDFQVGNRHNLERINVMNDNGTMNEEAGKYAGMDRFEAREALVKDLKEEGFLIKVEPIVHSVGHSERSGVQVEPRLSKQWFVKMKPLAEKVLENQKTDDKVNFVPERFEHTLEQWMSDVHDWVISRQLWWGHRIPAWYNKKTGETYVGLEAPKDSENWEQDPDVLDTWFSSALWPFSTLGWPDENSEDFKRYFPTNTLVTGYDIIFFWVSRMIFQSLHFTGKRPFDDVVLHGLIRDPQGRKMSKSLGNGVDPMDVVDEYGADALRWFLLNGTAPGQDTRYDPKKMGAAWNFINKIWNASRFVIMNLPEDAKPAHMPDTSKFDLADSWIFDRLNHTVSEVTRLFDEYQFGEAGRELYNFIWNDFCDWYIEISKVALNGDDEELKTRKQENLIWILDQILRLLHPIMPFVTEKLWLSMPHDGKSIMVAKYPETHKEFENKEADSQMAFLIEVIKAVRNIRMEVNAPMSSPIDIMIQIDDDNNKAVLDNNAEYVENFLHPKALSVAADIEAPKLAKTAVIPGAQIFVPLTELVNVDEELAKMEKEEKRLEAEVERAEKKLSNQGFVAHAPEAVINKEKEKKADYESQLAGVRERMKELKESK.

Positions P45–H55 match the 'HIGH' region motif. Residues K521–S525 carry the 'KMSKS' region motif. ATP is bound at residue K524. Positions L806–K879 form a coiled coil.

The protein belongs to the class-I aminoacyl-tRNA synthetase family. ValS type 1 subfamily. In terms of assembly, monomer.

Its subcellular location is the cytoplasm. The enzyme catalyses tRNA(Val) + L-valine + ATP = L-valyl-tRNA(Val) + AMP + diphosphate. Functionally, catalyzes the attachment of valine to tRNA(Val). As ValRS can inadvertently accommodate and process structurally similar amino acids such as threonine, to avoid such errors, it has a 'posttransfer' editing activity that hydrolyzes mischarged Thr-tRNA(Val) in a tRNA-dependent manner. This is Valine--tRNA ligase from Lactobacillus johnsonii (strain CNCM I-12250 / La1 / NCC 533).